Consider the following 6995-residue polypeptide: MELYLSACSKTANVAANKAASSTVAEDSQQCVDGRHKTPIPGVGAAQLLDLPLGVKLPMIPGTDTVYFTTNISEKLFRPSYGFNLSDPYCRLLETQYKSLHDPHLRTYYKRKDILRRLKKGGYITSNNKIVCSLRELNKYRQYLTSLKLDFERNYLREQQLISKQLHKLQETSQLPHCSDVTRFQNWLLQDNTHSIKDQERLLRHRYLDMISKELEQLERTAEEQRLLRIDRDERRQREYTRKKLTLRRKIEEEWKTKEMMLLTKIGEDVKREQKIEEQRRKSREESDRKKQAMLEKKMAYHLQKMQDTGLKDDIGRNGFDYRGQNGTTFESSSKKRKKQFDDIKIVYPDGDQKAYRGTSGQVSATVNQSQSSSKDVTKVSASSVTYPAEVQNSSSEQKRSEVTKRLSDERGKNSTDDSARESIISTQLSPTRNAKLSQISLDHQKEEKEMKSTWNGGLSKKSSYAGEPGSPTDAPPQGIFSFPVNSNTQQNLQHCLKDKVTSEELNSIIQNIMTWVVATVTSILYPAITKYEERVQNNTYPVTDDSDLSSDSSSFCSTCSEGFTYRNYTAKTLPVDPCTFASDMPIKKPPTPLKPPSAHVERTVIDQTYQRQGQSVPSQVNYQKTSLDYQFPKIGSSKSDSHLLTSLETCTKKSKDATTETESLEISLLYDKKAKAMDQIKNLKNVFVNFKCHLKGETQLILESIFQEIMSDLSQAIPSLSSVTAEVFVDQTETEREELLSNVDICSVASEIVENMLEKLESAVEKRCVQMFSQEDLSVDIKPSLSTSGDYLSSVETKPSEETLSYTLEPMCDVADDMVHAILEKLMILASYKKNDVPPEDTTKHFQQTKTEPIHKVHQQTEQKKASFASDPANQIVKEEIQSLISSIFSQSSLVGYVEEAISTILGYVQTELNNERLIASEETVVLLQLLDDVLTQLHQQPVKAGVKKPRRPRVRNLSDPEEKYRVTGTRPFNNLKSKRPFPPVNVPGMVLYSEDDDEEIDNFVQSVLDSSFNDEKSSSQEQVPNYWPKKRDTYFESKRSNKLPTKSTFQNKVGSHDWGLKLELSLSSEDIVKTKHCLGQEPSIFSQDQKHQIQKASENIVKHILTDMLKDMSSDSSSHLGSQTGKGASAFISEKSQGLSDQEWMEQMFSVSEICAFAHEITDSVINILHKASMHIPNTIKNAFTSVHPTHVAPFDTAHTSKETPSKMPFKVWFDSEKKMKYLSSLNMEHEKTSQLRSGKCEPKRVNDITDKITNTIFKRLKLFVCPKLQIGNKSSLIEKSLHSQLSTYTMKIVNIILHAIQSELEINKTKPNLKETDHPKCHKNKGWFTDPNKVVESRVTSVNDDIMESPLLTCICEMISSTNEDKKNTSTYTDKTLSTSICESGNFHKQSILSNKQDKNSFCQLLAKPCLQHSLADEKDFKVSSKLEVLDQIGDTLHEMLGKLTGDHPDPQPSCSHQNTETIDKDPPTMSNTQLISKAILENVLAKLCDVDIDTSIVNSGPKTVPESLDIDNLSFASTMEEMAKCTNIISNIISKIMKDNKEVTKSKAKNDLPTSSKTEIPKEMCPQNLKNIASDILNMVFAKLEHFASGSVVNVGNLNDENKKEHTVDWECESNSSPADSHDKSLQSTLYSHAKKVSNGILKAIQTELNMNPPDCKTDKKRSPEETQILTNIVDLILDVVSSDMFAEPESENQSNENYGYRPTYGNFLPGGAESDSFLDDDTQNKELIRDATSFNEETRTLSTDQMGLERTLSKIEVKLKEPHRSPIVPIIRNILNEIFQSALINQLNVFSLSRAHFSGMPQNAPTSSTQTSAHFMDQMMGPLVSDTDVSIVVNDVVRTVFHKLYSAAMTERHVSENRGKTIILSANVSFRECTYGGNAPVSGLNENVCDLQSSWNVDKQIKINVVEDIVQAILGNLETFAASKVESLFCPQVKFTVPVTLPVMQEEGSLSQALSGKDSYSDNQLPCLVDHGNPEQMDSWYQMSLSKLNIYAKDVARKILQGIKHELDKEQESPLLTNNIVVSENIASQVVNKVLDIVSCKSKCDKKSSDKDHYSEQQVGIIEQLVNKREYRKILEFQIQDTIEGILCDIYENILYQNNLSFATPTLKYGIPAKHSEANFEQVVMGTNIIPKVSVPKADVILVSKDIVDIVLHNLTSLVVLAINAKDSAPARVAIYDIFPKPQFQQPLSITQRTEETPGHFSHSKNKNLGSPDVYQVPVNGKEDTKELAPDPCKENANRITQPIFNRLQSFATERINSLMTPAFQSKGNVFVSPQFEIGKDDNCIFHEPGQAESDVDVLKLTTRTVTSQELVEPIFTSCRENFGTTPHLSQTNLKDYAAFIASTILKLIKNDLDLEVQSMHTYSSHILFQKNMIVSEIVNNILKILPNKEPIKEFFLSSPENSSCSQLTISSEDLVGYKEKEKATALPQFTNDSLEENQVTVEKESQRDVLEEIFMRKGESKPREKTEILRTVEEVLKKLSQKIMEIIGHVAPFNESPHTVSKSKSKTAAATQKKFFQSRINNVSNDILENVLSEMHSVVVTSLYRNNKSKREGEMHDSSDSSSVKPSGSRETKPTRKRSSPLRLGVPQMHPHADNLNALVLENTILPYSPLQIGKYLVQIVLENLSNFVSLHLEEGYPPEGSYDDLYLLRLHNAKLSPKNSPRPGGKASLKMRSKINSLSKFKTKPHLGISSTKTKIKNKLSAGEKTPRESRSKTALGLPQTPQVEDTKTTLKTKLPVAELRLYATNIITDILQVILSSLERAAQHRAMFNTKVLASSQILEASKIVNAVLQELYATNNDNLASPINISSLSDRRLSKQNLGAGYPTEQPCFYLENVSSQLEQIFPKEGILKKMFDKWQTETSDTETEKSKLLTIAENILTEISIKAKDLEYSLSLLNLPPLEECENRLYDRFKGVSTRAEDTNAQINMFGREIVEMLFEKLQLCFLSQMPTQDSNGILTSRKEHGTSKSKHGVPTKPILGGIQTYNSKMADQVSMSPSNQIVHEIVERVLHMLESFVDLKFKHISKYEFSEIVKMPIDNLFQAQQRQLSKKMLPKLPFRKFGDESKPGTIISKDDGQNTLLQVHLFHSELLTYSVTAVSGMLRIIKNKLDKEISQMEPSPVSILKENITASEIIGTLIDQCSHFEESLIKNLPTKHWFQGTENVYIVNQVEFATPVKMPPSNTSDTPRTRRSSQGSVSGMGFSSEDDMKEKYSVTSNSSSHISSCVENTNKSLEPMGRSNSEAMPSGSRHKAHDHGQRKPNFTPFEQVTKTHNFLPQGSVLQKLFKKVNDSTEESLKQVLSFIETGKRENPRVFHYETTKSAEPNEIKTTAPPLKICLAAENIVNTVLSSYGFPHQPNTNESTETMKPFFMSRQIPLSEVCEGQKDTEKTLLKTWYSRKALIQEEESEGLEACQEDFSLLHKWKNKKPQMTTETVEETKTIVFADHELGPNEMHLVARHVTTSVITHLKNFKTGVSTEKFSHVSSLSKKIDDANQPLISIYSNSSVCQFCEHLSDAVICYLFLNISDGIKKCSREKAWEIQDAIIDKNVIIHSQLYKTRSISIGDLALSIFEVIVEVLANRNMINADKAHQASIKAKYMFCPGVTSSDFDDIFQDLLKEVIFVLSKILGINHFENNVRNKSYPTLKNNLPVFNKVNTIENQIGPRKLESSPPLTDQLAQKNKLNYLARRLNSLVGSLRSRESKEVVNEVFNIVLDLFLPDEIPDGDLSSGKLAKTFSSSNNQPSNRSLANNVGLSPKSIFLLNIVCEKLIRTLLEKCMGGTPFFEDSSLFREIPEECQHVKVLPSVQGGGFDYREAPMDCEQFQGDYMSELLENLADVDQDLLSSDCILNVISHSLVKSLMDKLSHGLQQAPFENKYRNYRTREMQPFITKAKRQELIEPEETKGHVGFMSYDNNFLTKSLNNTNANSFKKHTQFGKKHAGKSISLSFSDGKESRGINTACFHKLCQRGVNGGVFSATFLEEIISELFYNLSTSLWKKNPNITEAWLNEINTLLINNVVKKLNDAEITVLRYPEERLYFPSAHKGCIAKIVDSIYYDVLQQYEFTVTCGGNLPYDNTPVAKRISNSILLEVIDYQLPSCFKGKLRSNLYHTLNAEIILYKLHNSLKNFNSEPMTSKDYSTMLPHSFLEYVIRRVLAQLISLPIKSSSLEKKYLASSDFNEMSNCITNKVMSAISKHKIWLTIYDNQCLYTDKNLQKMVDSVYSNILQMSSSVDSIQKNIISRSPIMIDQIASFIIQEIIENHLQPFLCGERLPRPKTPLDEVSYMVKQVLSDVVESHKSQKPSPFGIYPDKLVGETVTRVLSKIFSPNTNINVELENVTQKIVSSVHKHLDKAKIPILCHKQPPFPFSNTDIVDELVTSVYKNVLKQHGLDPDIDESVNGEVFVENITKLITAAISDYLLHPLFSGDLPAASCSNSVTDHTVYDILGDINKSSKPNQTLPLYNTLLPYTFLEDMIRVLLSKFFPSAPKIDSYKAASKDKEGVNFNEIASNLISDIRRKISQHEIRFSKDEDKTKSFYSENDVQHLVDAVFMNILENYGSPESVEQNITKSNDVFIDQIAGFIIKYICEHHLQPFLERKQLSTSSYKYSDDDRQDLLYGSAYSSTFLEDVVSGVVSKIFHRVIGIVQVNSTINSENILFDKAENLIYWITEEFSKAQVTTIENAEERLSLSPVEGNILQKIIDTVYSKILEEHEMEIMPNKDFLNDTKALASQITEIILSEISYFQIPPDLVANLPLRLHSKLSQNVLVNKVHYDISKSRFRRQASTMYTTMLSHVHLEKIVTQLMSQINPSDSSVGHSDTYQSELSNTVVKLINEIMSIISKHAICIVKHGNEKQSMISEKEMQSMVDSIYADLSHSNLYQSLTKDKKGLSSIPVSKIANFIIKEIFNHHLESFLSGDKSILSASVAQTCKKKATTSTKQRELSFIVNSAVFLEEVITELLCKILQTFIQNSLSMETPERAIAEIMDIVTTLVKSIVFEFTSSEILVAEHLDESLWFSETYKEMVQKTVNSVYGNIFYEYKSLTQLHRAVQYDTSGFGGKMYHFLLEEMYDYQVQSLVSGELMPSCYASPQSANIIKNVLNVILKDTNALPSCITVLPCSLIENMIYKLLENIFPSDDTTNELKKEEKEEAGPDDVDEFMAAASKLTDEIIQEISEHEIRFANAEDTASMIYETTENFIDSVCNNILKNSEFQAEVQKDAHKKGGSFLSKIAGSIIKEIMDHYLQLFLYGEGSHSSKLPHFGGASVVAKSGKEKAPSSLFSAAFLEDVIVDLAHKFCSFLTLTDDARKKDLPEAEIVSLAIKFANSLIRDFRKSGIKVLPHAEEIFSFPPIAKETIDEISNFVYDQFIGKLGADGIQKDGTGNMVIEMVSSLAQKAISTFKIQPLFSGDWCSTFFSFLDAENISQRVQLLPKETSMQISGALKQNQLALSKITSIKKDDTQDPILNSIATIMKSNIINLLSGPSAGVTDAKKEDESKVKPATRETTSPPTSPPATMKSQGSQVQQLATSPPTSMKSQRIQVQQSVMSPPTTMKGKGAQVQQFATSPPTSMKSQGSQVQQSAMSPPTTMKSRGAQVQESVTSPFTTKESRGAQVQQSAMSPPPSMKDRGAQVQESSTSPPTTMKSRGAQVQHLSSKYKGNETGKENLVLVNEQGQILEIFTHFAVAKTVENSPEKEVFISDLKIQNEKKLDVSKSSVKTDDRPMSKDKETMTEKTVLIPQQPVKEERKQSVVKTDTEEEQYSENECVENVIENIYDNVFIVSSQEPLDFSRPIYSRSLTSDKALVILKDSAQLVPAKDLSSSGHRDIAAKEKASKETETKIRRDRSETKRSKEMKSKSSMTDHPKPSESKSKIVPAKFLEDVIAELVNKLVFTFISDKTTDTNEQKPGELYDTAMRLVNSMTKELSDAEIKVFRPEKEDEVQAAKEPAPTSPPEVKETVTKEPSPSTNIKNEDQMSDVQKTPEQSSPDKLPALEKIPSIEKSIVNKIVHSCVCNIFKECKSQESICENINSNGENLAKRLTSTVINEIFQHQLNLIFSDEVPASACVPLESKDVEQKVQNVVQTVSKECQTASPYTVQLPYKFLEDVTSGLLAKVFSKLSNVKTKLTPENVLTQLDFLQSNLVKTIAAEISKNEDLIIQYVESLHPNDDEVIQLVVQTIYNNLLPQFGSQEILQKCIISGCKLLSKTIVDLVLREVTGNQLQNYFGGELTPIQCAEVDNVVENILTNVVLTTPSQPSGPRKLSYNIIETIAVKFLSKLLSVFPKGHPERTKSQETEMRKITSKILHSIQEFISKSKIKVVQPVKESEAVPSADKAAIEKVVNSVYTNLLKHCGSPTSAFEDLMRKSDVISDIIGFSMVKEISNSEFQPQAEEELSSSELALEAVKIMEKVVKIIDELKSQEKPASITDVMLDSRVLEEALALFLAKLVKTPGPASKDTTSLTKPELNKIASQLTKSVTAEISKSNISLVESNHEEQSLDPENIEVISQVVESVYSNVVKQSGTENELSDIKGTKKAFPKKVASLIVDGVSSVPSCRVITESSYTAAHGDLDTNRIIEKAQKHAALMSSDSDKDSKKELEDEFPVRIVPHVRNKPLRIDPNIVSDHLAVISMKTQPLETLQMDCLKRTGCSIAELRRNSIRGIGPSSTDVSEMGTRQKERRISLDRTGRLDVKPLEAVGRNSFQNVRRPDITRVELLKDINNKTDLIIRLVAHDIGRKESDSSLSEGMVSDEEEVVLGEVVGDQCLRKISGGRVQQVKKSAESHVVSSKTATSTSNLKRFLALSKCCQPTSGENIESIEESGIQIMDPNKAYVKRAAAELDMPSCKSLAEETTSRDKLQYKEEEILASEPTHYFIHRIMSTSSYNQEDLISGEAEEFLPDAKANALEESCQEPQEGNSNSLEFVTIYKGSKHIAGSARLSKEHVSEMPRSSISKQGSRVLAKVSSTLSKVFSRSSGSIPKSSSPPHQDKR.

Disordered stretches follow at residues 273-292 (EQKI…RKKQ), 308-336 (DTGL…SSKK), and 351-476 (GDQK…TDAP). The segment covering 359 to 396 (TSGQVSATVNQSQSSSKDVTKVSASSVTYPAEVQNSSS) has biased composition (polar residues). Residues 397–421 (EQKRSEVTKRLSDERGKNSTDDSAR) show a composition bias toward basic and acidic residues. Residues 424-442 (IISTQLSPTRNAKLSQISL) show a composition bias toward polar residues. At serine 430 the chain carries Phosphoserine. The span at 443-452 (DHQKEEKEMK) shows a compositional bias: basic and acidic residues. Residues 453 to 463 (STWNGGLSKKS) are compositionally biased toward polar residues. A coiled-coil region spans residues 665–692 (LEISLLYDKKAKAMDQIKNLKNVFVNFK). Disordered stretches follow at residues 1452 to 1472 (PDPQ…DPPT), 2554 to 2595 (KSKR…VPQM), 2699 to 2731 (TKTK…TPQV), 3182 to 3270 (PVKM…PNFT), 5489 to 5665 (GPSA…KYKG), 5719 to 5740 (SKSS…MTEK), 5823 to 5878 (KDLS…SKSK), 5943 to 5996 (KEDE…PDKL), and 6973 to 6995 (SKVF…QDKR). The span at 2555–2565 (SKREGEMHDSS) shows a compositional bias: basic and acidic residues. A compositionally biased stretch (polar residues) spans 3187–3204 (PSNTSDTPRTRRSSQGSV). Residues 3220–3231 (SVTSNSSSHISS) are compositionally biased toward low complexity. Polar residues predominate over residues 3232–3250 (CVENTNKSLEPMGRSNSEA). Positions 3255–3265 (SRHKAHDHGQR) are enriched in basic residues. Over residues 5496-5509 (DAKKEDESKVKPAT) the composition is skewed to basic and acidic residues. 3 stretches are compositionally biased toward polar residues: residues 5523–5557 (MKSQ…SPPT), 5565–5625 (QVQQ…QSAM), and 5638–5650 (VQES…TTMK). Composition is skewed to basic and acidic residues over residues 5719-5738 (SKSS…ETMT) and 5829-5877 (GHRD…ESKS). Residues 5982 to 5993 (SDVQKTPEQSSP) are compositionally biased toward polar residues. The span at 6977 to 6995 (SRSSGSIPKSSSPPHQDKR) shows a compositional bias: low complexity.

As to quaternary structure, may interact with AKAP4. Predominantly expressed in testis.

Its function is as follows. Plays a role in spermatogenesis. The chain is Fibrous sheath-interacting protein 2 (Fsip2) from Mus musculus (Mouse).